A 286-amino-acid polypeptide reads, in one-letter code: Phosphate import ATP-binding protein PstB (286 aa).

The segment at 1 to 27 is disordered; it reads MEPKETLRQRWPGRGRTEETGAMKKSD. Residues 15 to 27 show a composition bias toward basic and acidic residues; it reads GRTEETGAMKKSD. The region spanning 33–281 is the ABC transporter domain; it reads MTVEHLNMYY…PDRKETEDYV (249 aa). Residue 65-72 participates in ATP binding; the sequence is GPSGCGKS.

The protein belongs to the ABC transporter superfamily. Phosphate importer (TC 3.A.1.7) family. As to quaternary structure, the complex is composed of two ATP-binding proteins (PstB), two transmembrane proteins (PstC and PstA) and a solute-binding protein (PstS).

It is found in the cell membrane. It carries out the reaction phosphate(out) + ATP + H2O = ADP + 2 phosphate(in) + H(+). In terms of biological role, part of the ABC transporter complex PstSACB involved in phosphate import. Responsible for energy coupling to the transport system. The sequence is that of Phosphate import ATP-binding protein PstB from Rubrobacter xylanophilus (strain DSM 9941 / JCM 11954 / NBRC 16129 / PRD-1).